The following is a 259-amino-acid chain: Eukaryotic translation initiation factor 3 subunit G-2 (259 aa).

Residues 179–257 form the RRM domain; it reads SAVRISNLSE…LILSVEWSKP (79 aa).

This sequence belongs to the eIF-3 subunit G family. As to quaternary structure, component of the eukaryotic translation initiation factor 3 (eIF-3) complex. The eIF-3 complex interacts with pix.

The protein localises to the cytoplasm. Functionally, RNA-binding component of the eukaryotic translation initiation factor 3 (eIF-3) complex, which is involved in protein synthesis of a specialized repertoire of mRNAs and, together with other initiation factors, stimulates binding of mRNA and methionyl-tRNAi to the 40S ribosome. The eIF-3 complex specifically targets and initiates translation of a subset of mRNAs involved in cell proliferation. This subunit can bind 18S rRNA. In Drosophila mojavensis (Fruit fly), this protein is Eukaryotic translation initiation factor 3 subunit G-2.